The chain runs to 177 residues: MSRVGKYPVEVPSGVQVSIVDGIFVAKGKLGELKLPLSQHIEAEIADNKVSVRPVGTAAPARMMWGTTRALVASMVKGVSEGFSKTLEVTGTGYRAAVQGSNLVMNLGYSHDIVYAIPAGIKITTPRPTAIVVEGVDKQRVGQVALDIRSFRKPEPYKGKGVRYDTETIRRKEGKKK.

The span at 156-171 shows a compositional bias: basic and acidic residues; that stretch reads PYKGKGVRYDTETIRR. The tract at residues 156 to 177 is disordered; that stretch reads PYKGKGVRYDTETIRRKEGKKK.

It belongs to the universal ribosomal protein uL6 family. Part of the 50S ribosomal subunit.

In terms of biological role, this protein binds to the 23S rRNA, and is important in its secondary structure. It is located near the subunit interface in the base of the L7/L12 stalk, and near the tRNA binding site of the peptidyltransferase center. The sequence is that of Large ribosomal subunit protein uL6 from Gluconacetobacter diazotrophicus (strain ATCC 49037 / DSM 5601 / CCUG 37298 / CIP 103539 / LMG 7603 / PAl5).